A 481-amino-acid chain; its full sequence is Glutamyl-tRNA(Gln) amidotransferase subunit A (481 aa).

Catalysis depends on charge relay system residues Lys76 and Ser151. The active-site Acyl-ester intermediate is the Ser175.

Belongs to the amidase family. GatA subfamily. As to quaternary structure, heterotrimer of A, B and C subunits.

The enzyme catalyses L-glutamyl-tRNA(Gln) + L-glutamine + ATP + H2O = L-glutaminyl-tRNA(Gln) + L-glutamate + ADP + phosphate + H(+). Its function is as follows. Allows the formation of correctly charged Gln-tRNA(Gln) through the transamidation of misacylated Glu-tRNA(Gln) in organisms which lack glutaminyl-tRNA synthetase. The reaction takes place in the presence of glutamine and ATP through an activated gamma-phospho-Glu-tRNA(Gln). This is Glutamyl-tRNA(Gln) amidotransferase subunit A from Neisseria gonorrhoeae (strain ATCC 700825 / FA 1090).